Consider the following 1480-residue polypeptide: ABC transporter G family member 49 (1480 aa).

The span at 1–18 (MHTTTQATPQKSMVMTTT) shows a compositional bias: polar residues. Disordered stretches follow at residues 1–42 (MHTT…AGSS), 60–81 (VSGE…EDDE), and 104–124 (SSTR…GGAA). Composition is skewed to gly residues over residues 63–73 (ELGGGGGGGGG) and 107–123 (RGGG…GGGA). An ABC transporter 1 domain is found at 212-485 (LAAKLGFSHH…FESCGFKCPE (274 aa)). 245-252 (GPPGCGKT) serves as a coordination point for ATP. The ABC transmembrane type-2 1 domain maps to 563-775 (HLLKACFDRE…AEIGLTGNEF (213 aa)). A run of 6 helical transmembrane segments spans residues 581–601 (FLHI…GTVF), 619–639 (SLFY…VMSI), 656–676 (GWAY…VAAL), 699–719 (LLVL…VGSY), 725–745 (VGPI…GFLI), and 811–831 (VAAL…GLTI). An ABC transporter 2 domain is found at 877–1129 (ISFQDVNYYV…KVIQYFQSIP (253 aa)). Residue 922 to 929 (GVTGAGKT) coordinates ATP. The 217-residue stretch at 1202 to 1418 (EQFKACLWKQ…TLNLLFTTQF (217 aa)) folds into the ABC transmembrane type-2 2 domain. The next 7 helical transmembrane spans lie at 1226 to 1246 (IVFM…QGNI), 1254 to 1274 (GLFT…INNS), 1311 to 1331 (IPYV…TIGY), 1340 to 1360 (WFFY…MLIV), 1368 to 1388 (VASI…GFVM), 1396 to 1416 (WWIW…LFTT), and 1449 to 1469 (LLPL…ILYG).

This sequence belongs to the ABC transporter superfamily. ABCG family. PDR (TC 3.A.1.205) subfamily.

Its subcellular location is the membrane. Its function is as follows. May be a general defense protein. The sequence is that of ABC transporter G family member 49 from Oryza sativa subsp. japonica (Rice).